Consider the following 315-residue polypeptide: ATP synthase gamma chain (315 aa).

F-type ATPases have 2 components, CF(1) - the catalytic core - and CF(0) - the membrane proton channel. CF(1) has five subunits: alpha(3), beta(3), gamma(1), delta(1), epsilon(1). CF(0) has four main subunits: a(1), b(1), b'(1) and c(9-12).

The protein resides in the cellular thylakoid membrane. Produces ATP from ADP in the presence of a proton gradient across the membrane. The gamma chain is believed to be important in regulating ATPase activity and the flow of protons through the CF(0) complex. Its function is as follows. The complex from the organism is particularly stable to disruption and remains functional after 6 hrs at 55 degrees Celsius. This Thermosynechococcus vestitus (strain NIES-2133 / IAM M-273 / BP-1) protein is ATP synthase gamma chain.